Here is a 560-residue protein sequence, read N- to C-terminus: Glucose-6-phosphate isomerase, cytosolic (560 aa).

An N-acetylalanine modification is found at A2. The active-site Proton donor is E361. Residues H392 and K517 contribute to the active site.

This sequence belongs to the GPI family. In terms of assembly, homodimer.

Its subcellular location is the cytoplasm. The catalysed reaction is alpha-D-glucose 6-phosphate = beta-D-fructose 6-phosphate. It participates in carbohydrate degradation; glycolysis; D-glyceraldehyde 3-phosphate and glycerone phosphate from D-glucose: step 2/4. The polypeptide is Glucose-6-phosphate isomerase, cytosolic (PGIC) (Arabidopsis lyrata subsp. petraea (Northern rock-cress)).